The chain runs to 309 residues: Probable lipid kinase YegS-like (309 aa).

The DAGKc domain occupies 1-133 (MPLTHIRLLL…IDIIRANNNY (133 aa)). ATP contacts are provided by residues serine 39, 65–71 (GDGSLNE), and threonine 95. Mg(2+) contacts are provided by leucine 214, aspartate 217, and leucine 219. The Proton acceptor role is filled by glutamate 273.

This sequence belongs to the diacylglycerol/lipid kinase family. YegS lipid kinase subfamily. Requires Mg(2+) as cofactor. Ca(2+) serves as cofactor.

Its subcellular location is the cytoplasm. Probably phosphorylates lipids; the in vivo substrate is unknown. This chain is Probable lipid kinase YegS-like, found in Shewanella frigidimarina (strain NCIMB 400).